The chain runs to 184 residues: ATP synthase subunit b, chloroplastic (184 aa).

The chain crosses the membrane as a helical span at residues 29 to 49 (INLINLILVLGILFYYGKGVL).

The protein belongs to the ATPase B chain family. In terms of assembly, F-type ATPases have 2 components, F(1) - the catalytic core - and F(0) - the membrane proton channel. F(1) has five subunits: alpha(3), beta(3), gamma(1), delta(1), epsilon(1). F(0) has four main subunits: a(1), b(1), b'(1) and c(10-14). The alpha and beta chains form an alternating ring which encloses part of the gamma chain. F(1) is attached to F(0) by a central stalk formed by the gamma and epsilon chains, while a peripheral stalk is formed by the delta, b and b' chains.

Its subcellular location is the plastid. It localises to the chloroplast thylakoid membrane. Its function is as follows. F(1)F(0) ATP synthase produces ATP from ADP in the presence of a proton or sodium gradient. F-type ATPases consist of two structural domains, F(1) containing the extramembraneous catalytic core and F(0) containing the membrane proton channel, linked together by a central stalk and a peripheral stalk. During catalysis, ATP synthesis in the catalytic domain of F(1) is coupled via a rotary mechanism of the central stalk subunits to proton translocation. Component of the F(0) channel, it forms part of the peripheral stalk, linking F(1) to F(0). This chain is ATP synthase subunit b, chloroplastic, found in Adiantum capillus-veneris (Maidenhair fern).